The sequence spans 164 residues: 3-isopropylmalate dehydratase small subunit (164 aa).

The protein belongs to the LeuD family. LeuD type 2 subfamily. Heterodimer of LeuC and LeuD.

It catalyses the reaction (2R,3S)-3-isopropylmalate = (2S)-2-isopropylmalate. Its pathway is amino-acid biosynthesis; L-leucine biosynthesis; L-leucine from 3-methyl-2-oxobutanoate: step 2/4. In terms of biological role, catalyzes the isomerization between 2-isopropylmalate and 3-isopropylmalate, via the formation of 2-isopropylmaleate. This is 3-isopropylmalate dehydratase small subunit from Lachnospira eligens (strain ATCC 27750 / DSM 3376 / VPI C15-48 / C15-B4) (Eubacterium eligens).